The following is a 129-amino-acid chain: Small ribosomal subunit protein uS11 (129 aa).

Belongs to the universal ribosomal protein uS11 family. As to quaternary structure, part of the 30S ribosomal subunit. Interacts with proteins S7 and S18. Binds to IF-3.

In terms of biological role, located on the platform of the 30S subunit, it bridges several disparate RNA helices of the 16S rRNA. Forms part of the Shine-Dalgarno cleft in the 70S ribosome. The protein is Small ribosomal subunit protein uS11 of Cereibacter sphaeroides (strain ATCC 17025 / ATH 2.4.3) (Rhodobacter sphaeroides).